A 297-amino-acid polypeptide reads, in one-letter code: Tyrosine recombinase XerD (297 aa).

The region spanning 1-86 (MKDSALIELF…AMRKLFQYLY (86 aa)) is the Core-binding (CB) domain. Residues 107 to 291 (RLPKYLTEQQ…AKERLKHLHE (185 aa)) form the Tyr recombinase domain. Active-site residues include arginine 147, lysine 171, histidine 243, arginine 246, and histidine 269. Residue tyrosine 278 is the O-(3'-phospho-DNA)-tyrosine intermediate of the active site.

This sequence belongs to the 'phage' integrase family. XerD subfamily. As to quaternary structure, forms a cyclic heterotetrameric complex composed of two molecules of XerC and two molecules of XerD.

It localises to the cytoplasm. Its function is as follows. Site-specific tyrosine recombinase, which acts by catalyzing the cutting and rejoining of the recombining DNA molecules. The XerC-XerD complex is essential to convert dimers of the bacterial chromosome into monomers to permit their segregation at cell division. It also contributes to the segregational stability of plasmids. The chain is Tyrosine recombinase XerD from Pasteurella multocida (strain Pm70).